The chain runs to 481 residues: Phospho-2-dehydro-3-deoxyheptonate aldolase (481 aa).

A disordered region spans residues 1-22; that stretch reads MSQQTTPNAPGWAPDSWRSKPI.

It belongs to the class-II DAHP synthase family. In terms of assembly, homodimer. The N-terminus is blocked.

The enzyme catalyses D-erythrose 4-phosphate + phosphoenolpyruvate + H2O = 7-phospho-2-dehydro-3-deoxy-D-arabino-heptonate + phosphate. Its pathway is metabolic intermediate biosynthesis; chorismate biosynthesis; chorismate from D-erythrose 4-phosphate and phosphoenolpyruvate: step 1/7. The protein is Phospho-2-dehydro-3-deoxyheptonate aldolase (aro-8) of Neurospora crassa (strain ATCC 24698 / 74-OR23-1A / CBS 708.71 / DSM 1257 / FGSC 987).